Reading from the N-terminus, the 52-residue chain is UPF0181 protein HD_1137 (52 aa).

Belongs to the UPF0181 family.

This is UPF0181 protein HD_1137 from Haemophilus ducreyi (strain 35000HP / ATCC 700724).